Consider the following 212-residue polypeptide: Ribosomal RNA large subunit methyltransferase E (212 aa).

S-adenosyl-L-methionine is bound by residues glycine 56, tryptophan 58, aspartate 78, aspartate 94, and aspartate 117. The active-site Proton acceptor is the lysine 157.

It belongs to the class I-like SAM-binding methyltransferase superfamily. RNA methyltransferase RlmE family.

It localises to the cytoplasm. The enzyme catalyses uridine(2552) in 23S rRNA + S-adenosyl-L-methionine = 2'-O-methyluridine(2552) in 23S rRNA + S-adenosyl-L-homocysteine + H(+). Specifically methylates the uridine in position 2552 of 23S rRNA at the 2'-O position of the ribose in the fully assembled 50S ribosomal subunit. The sequence is that of Ribosomal RNA large subunit methyltransferase E from Ehrlichia chaffeensis (strain ATCC CRL-10679 / Arkansas).